The sequence spans 713 residues: Phosphoribosylformylglycinamidine synthase subunit PurL (713 aa).

His32 is a catalytic residue. Tyr35 serves as a coordination point for ATP. A Mg(2+)-binding site is contributed by Glu76. Substrate-binding positions include 77-80 (SHNH) and Arg99. His78 serves as the catalytic Proton acceptor. Asp100 contacts Mg(2+). Gln224 lines the substrate pocket. Residue Asp252 coordinates Mg(2+). Residue 296–298 (ESQ) coordinates substrate. Asp471 and Gly508 together coordinate ATP. Asn509 contacts Mg(2+). Ser511 provides a ligand contact to substrate.

It belongs to the FGAMS family. As to quaternary structure, monomer. Part of the FGAM synthase complex composed of 1 PurL, 1 PurQ and 2 PurS subunits.

It is found in the cytoplasm. It carries out the reaction N(2)-formyl-N(1)-(5-phospho-beta-D-ribosyl)glycinamide + L-glutamine + ATP + H2O = 2-formamido-N(1)-(5-O-phospho-beta-D-ribosyl)acetamidine + L-glutamate + ADP + phosphate + H(+). It functions in the pathway purine metabolism; IMP biosynthesis via de novo pathway; 5-amino-1-(5-phospho-D-ribosyl)imidazole from N(2)-formyl-N(1)-(5-phospho-D-ribosyl)glycinamide: step 1/2. Functionally, part of the phosphoribosylformylglycinamidine synthase complex involved in the purines biosynthetic pathway. Catalyzes the ATP-dependent conversion of formylglycinamide ribonucleotide (FGAR) and glutamine to yield formylglycinamidine ribonucleotide (FGAM) and glutamate. The FGAM synthase complex is composed of three subunits. PurQ produces an ammonia molecule by converting glutamine to glutamate. PurL transfers the ammonia molecule to FGAR to form FGAM in an ATP-dependent manner. PurS interacts with PurQ and PurL and is thought to assist in the transfer of the ammonia molecule from PurQ to PurL. The polypeptide is Phosphoribosylformylglycinamidine synthase subunit PurL (Thermococcus sibiricus (strain DSM 12597 / MM 739)).